The primary structure comprises 2059 residues: Desmoplakin-A (2059 aa).

Positions 1-11 are enriched in polar residues; it reads MSLSGSQTRLH. A disordered region spans residues 1 to 25; it reads MSLSGSQTRLHQISRRSSSRPDLTA. 2 coiled-coil regions span residues 320–354 and 397–453; these read IPQK…LLKN and FKEA…VQTL. Positions 665–690 are disordered; it reads EVSSGKTATGVSSGKTATGVSSGKTS. Positions 671–690 are enriched in low complexity; it reads TATGVSSGKTATGVSSGKTS. 2 coiled-coil regions span residues 1062–1229 and 1261–1383; these read MEEL…AELE and LQQD…LQQR. 6 Plectin repeats span residues 1450–1488, 1489–1526, 1564–1602, 1666–1694, 1847–1885, and 1923–1961; these read YLGG…TLEL, LEAQ…KDKL, LLEA…NEIL, IVDP…FLEL, LLEA…SVKL, and FLEF…AQKL. Positions 2008-2059 are disordered; that stretch reads KGISSPYNVSSGPSSRSGSRAGSRTGSRSGSRRGSVDYSSSSVSYTFFSSAS. A compositionally biased stretch (low complexity) spans 2011–2059; the sequence is SSPYNVSSGPSSRSGSRAGSRTGSRSGSRRGSVDYSSSSVSYTFFSSAS.

Belongs to the plakin or cytolinker family.

The protein resides in the cell junction. It is found in the desmosome. The protein localises to the cell membrane. Involved in the organization of desmosome cell-cell junctions. Of particular importance in cell adhesion in the skin and during cardiac development. May also play a role in the regulation of Wnt, TGF-beta and Hippo signaling pathways. The chain is Desmoplakin-A from Danio rerio (Zebrafish).